Here is a 344-residue protein sequence, read N- to C-terminus: Olfactory receptor class A-like protein 4 (344 aa).

Residues 1-10 (MSEVLTVDAV) are Extracellular-facing. The chain crosses the membrane as a helical span at residues 11–31 (LFGLLVFSGIIGNIMVIYVVF). Over 32–47 (DCAKLCASRHLPPSDT) the chain is Cytoplasmic. A helical transmembrane segment spans residues 48-68 (ILVHLCLANLLTSVFRTVPIF). Residues 69 to 84 (VSDLGLQVWLTAGWCR) are Extracellular-facing. The cysteines at positions 83 and 169 are disulfide-linked. A helical membrane pass occupies residues 85 to 105 (VFMLLWVWWRAVGCWVTLALS). Residues 106 to 130 (AFHCATLRRQHVSMGPLGHSRERRR) are Cytoplasmic-facing. The helical transmembrane segment at 131 to 151 (VWVVLAVVWAANLLFSLPALV) threads the bilayer. Over 152–186 (YTTQVRGNATVELMVISCTTRPLLGCVWEFPTFQQ) the chain is Extracellular. Residue Asn-159 is glycosylated (N-linked (GlcNAc...) asparagine). A helical transmembrane segment spans residues 187–207 (GYAFASSSLALNEVLPLVLMV). The Cytoplasmic segment spans residues 208–246 (GTNLATLQALGKHIRTVRAGGSTGAELDRHVSSERKAGH). Residues 247–267 (VIMALVALFVGCWVLQVAAVT) form a helical membrane-spanning segment. Topologically, residues 268–279 (YYNHNRGAHAEG) are extracellular. The helical transmembrane segment at 280-300 (LLTVAHFSASLFVGFSPLVVA) threads the bilayer. The Cytoplasmic portion of the chain corresponds to 301–344 (LGHGKLRRRISGILQSCMHRLKQTQDKPAEITEKDGRTTQSAMK). Residues 324–337 (TQDKPAEITEKDGR) are compositionally biased toward basic and acidic residues. Residues 324–344 (TQDKPAEITEKDGRTTQSAMK) are disordered.

This sequence belongs to the G-protein coupled receptor 1 family. In terms of tissue distribution, highly expressed in the olfactory rosette. Specifically localizes to crypt neurons in the olfactory neuroepithelium. Colocalizes with the inhibitory G-protein gnaia in crypt neurons. Not detected in other tissues tested.

Its subcellular location is the cell membrane. In terms of biological role, probable olfactory receptor. The polypeptide is Olfactory receptor class A-like protein 4 (ora4) (Danio rerio (Zebrafish)).